Here is a 389-residue protein sequence, read N- to C-terminus: MFSAYKDTIEDGDLVLGWMTRTAIKPIVVEKKEGLFNTRYGAFPHRNMDKYGAQLGSMSKQGFIHLIHPTPELWTLSLPHRTQIVYTTDSSYIVQRLKIRPGSTVIESGTGSGSFTHAISRSAGLAGKVYSYEFHEERYNLAKQEFERHQLTNVIPTHRDVCNDGFDIENIDVNATAVFLDLPAPWTAIPHLERVIDRSVVSRVCCFSPCFEQVVKAVQALQEAGWVDIEMVEVAAKRWESRLEMKRSLDEAITRLRDVKARRETGLAKRNARIKVETETGVEEEESDERDAKRSKTESGHRGYNPWGKGQKIKEGDESFEWTEVSKCEQEIKSHTSYLLFASRLPKLGEEVFDKDMCVRPYSERCPETSTEGAEASTEATEAPARTEA.

Residues 112–114 (SGS), E133, R138, 160–161 (DV), and D181 contribute to the S-adenosyl-L-methionine site. Disordered regions lie at residues 278 to 313 (TETGVEEEESDERDAKRSKTESGHRGYNPWGKGQKI) and 364 to 389 (ERCPETSTEGAEASTEATEAPARTEA). A compositionally biased stretch (acidic residues) spans 280-289 (TGVEEEESDE). The segment covering 290–301 (RDAKRSKTESGH) has biased composition (basic and acidic residues). The segment covering 368 to 389 (ETSTEGAEASTEATEAPARTEA) has biased composition (low complexity).

Belongs to the class I-like SAM-binding methyltransferase superfamily. TRM61 family. As to quaternary structure, heterotetramer; composed of two copies of TRM6 and two copies of TRM61.

It localises to the nucleus. It catalyses the reaction adenosine(58) in tRNA + S-adenosyl-L-methionine = N(1)-methyladenosine(58) in tRNA + S-adenosyl-L-homocysteine + H(+). Its function is as follows. Catalytic subunit of tRNA (adenine-N(1)-)-methyltransferase, which catalyzes the formation of N(1)-methyladenine at position 58 (m1A58) in initiator methionyl-tRNA. This is tRNA (adenine(58)-N(1))-methyltransferase catalytic subunit TRM61 (TRM61) from Yarrowia lipolytica (strain CLIB 122 / E 150) (Yeast).